The chain runs to 595 residues: Aspartate--tRNA(Asp/Asn) ligase (595 aa).

Residue E171 participates in L-aspartate binding. The aspartate stretch occupies residues 195–198 (QLFK). An L-aspartate-binding site is contributed by R217. Residues 217-219 (RDE) and Q226 contribute to the ATP site. H454 serves as a coordination point for L-aspartate. E488 contributes to the ATP binding site. R495 is a binding site for L-aspartate. 540 to 543 (GLDR) is a binding site for ATP.

The protein belongs to the class-II aminoacyl-tRNA synthetase family. Type 1 subfamily. As to quaternary structure, homodimer.

It localises to the cytoplasm. It catalyses the reaction tRNA(Asx) + L-aspartate + ATP = L-aspartyl-tRNA(Asx) + AMP + diphosphate. Its function is as follows. Aspartyl-tRNA synthetase with relaxed tRNA specificity since it is able to aspartylate not only its cognate tRNA(Asp) but also tRNA(Asn). Reaction proceeds in two steps: L-aspartate is first activated by ATP to form Asp-AMP and then transferred to the acceptor end of tRNA(Asp/Asn). The polypeptide is Aspartate--tRNA(Asp/Asn) ligase (Bordetella petrii (strain ATCC BAA-461 / DSM 12804 / CCUG 43448)).